Consider the following 219-residue polypeptide: Phosphatidylserine decarboxylase proenzyme (219 aa).

Ser-188 acts as the Schiff-base intermediate with substrate; via pyruvic acid in catalysis. Position 188 is a pyruvic acid (Ser); by autocatalysis (Ser-188).

Belongs to the phosphatidylserine decarboxylase family. PSD-A subfamily. Heterodimer of a large membrane-associated beta subunit and a small pyruvoyl-containing alpha subunit. Pyruvate is required as a cofactor. Post-translationally, is synthesized initially as an inactive proenzyme. Formation of the active enzyme involves a self-maturation process in which the active site pyruvoyl group is generated from an internal serine residue via an autocatalytic post-translational modification. Two non-identical subunits are generated from the proenzyme in this reaction, and the pyruvate is formed at the N-terminus of the alpha chain, which is derived from the carboxyl end of the proenzyme. The post-translation cleavage follows an unusual pathway, termed non-hydrolytic serinolysis, in which the side chain hydroxyl group of the serine supplies its oxygen atom to form the C-terminus of the beta chain, while the remainder of the serine residue undergoes an oxidative deamination to produce ammonia and the pyruvoyl prosthetic group on the alpha chain.

The protein resides in the cell membrane. The catalysed reaction is a 1,2-diacyl-sn-glycero-3-phospho-L-serine + H(+) = a 1,2-diacyl-sn-glycero-3-phosphoethanolamine + CO2. It functions in the pathway phospholipid metabolism; phosphatidylethanolamine biosynthesis; phosphatidylethanolamine from CDP-diacylglycerol: step 2/2. In terms of biological role, catalyzes the formation of phosphatidylethanolamine (PtdEtn) from phosphatidylserine (PtdSer). The chain is Phosphatidylserine decarboxylase proenzyme from Trichlorobacter lovleyi (strain ATCC BAA-1151 / DSM 17278 / SZ) (Geobacter lovleyi).